Reading from the N-terminus, the 344-residue chain is Phosphate acyltransferase (344 aa).

Belongs to the PlsX family. Homodimer. Probably interacts with PlsY.

Its subcellular location is the cytoplasm. The catalysed reaction is a fatty acyl-[ACP] + phosphate = an acyl phosphate + holo-[ACP]. It functions in the pathway lipid metabolism; phospholipid metabolism. In terms of biological role, catalyzes the reversible formation of acyl-phosphate (acyl-PO(4)) from acyl-[acyl-carrier-protein] (acyl-ACP). This enzyme utilizes acyl-ACP as fatty acyl donor, but not acyl-CoA. In Enterobacter sp. (strain 638), this protein is Phosphate acyltransferase.